The sequence spans 1186 residues: Probable inactive serine/threonine-protein kinase DDB_G0293184 (1186 aa).

Positions 1–12 (MEQEDQQYEEDS) are enriched in acidic residues. 2 disordered regions span residues 1-55 (MEQE…NNDS) and 99-122 (MEQQ…NTNF). 2 stretches are compositionally biased toward low complexity: residues 34-48 (TTTE…TTPT) and 99-110 (MEQQQQQQHLQP). The 265-residue stretch at 173-437 (YESPPTLGKY…VHDLLRHPWL (265 aa)) folds into the Protein kinase domain. ATP-binding positions include 179 to 187 (LGKYDKVIL) and lysine 205. Disordered stretches follow at residues 447 to 468 (SSSS…GNVN) and 530 to 551 (YNNY…NECG). Residues 453 to 468 (QAHPTVQSNNLNGNVN) are compositionally biased toward polar residues. Positions 530-545 (YNNYNNNNNNNNNTND) are enriched in low complexity. A coiled-coil region spans residues 631 to 659 (LKRTNQMANDLGRKYEILQSNIKRLEDYL). Residues 766-784 (NNLDPSNNNESVNLSTSPG) show a composition bias toward polar residues. 2 disordered regions span residues 766–911 (NNLD…NGNN) and 959–988 (ENKK…GDVS). The span at 785–836 (SLVNSNSNPSISNSLNNNNNNNNNNNNNNNGNPNVIITTNNNCNSNSNGNNI) shows a compositional bias: low complexity. A compositionally biased stretch (basic and acidic residues) spans 847-896 (KEVKEGKEIKEIKEPKEKDKDKEKDKDKEKDKDKEKDKDKEKEKDKDKEN). Residues 875-909 (EKDKDKEKDKDKEKEKDKDKENNNNNNSNNNNNNG) are a coiled coil. Residues 897-911 (NNNNNSNNNNNNGNN) show a composition bias toward low complexity. Over residues 969-978 (LDSTNKQSPG) the composition is skewed to polar residues. The region spanning 1004–1186 (VRLDDLMTRE…LSFPKFNLSV (183 aa)) is the Rho-GAP domain.

Belongs to the protein kinase superfamily. STE Ser/Thr protein kinase family.

The chain is Probable inactive serine/threonine-protein kinase DDB_G0293184 from Dictyostelium discoideum (Social amoeba).